The following is a 232-amino-acid chain: MNALVICSGGLDSVSLAHKVATEQKLIGLLSFDYGQRHKKELGFAAICAKRLAVPHQIVDIRDVGRNLSGSALTDNVDVPDGHYAEDSMRITVVPNRNAIMLAIAFGVAAAKKADAVATAVHGGDHFIYPDCRPAFIDAFQTMQNHALAGYADIRLYAPYVNMSKADIVSEGAKYATPFEATWSCYKGGARHCGRCGTCVERREAFDLAGITDPTDYEDADFWLHAIQTRSA.

Cysteine 7–alanine 17 contacts ATP. 4 residues coordinate Zn(2+): cysteine 185, cysteine 193, cysteine 196, and cysteine 199.

Belongs to the QueC family. Requires Zn(2+) as cofactor.

The enzyme catalyses 7-carboxy-7-deazaguanine + NH4(+) + ATP = 7-cyano-7-deazaguanine + ADP + phosphate + H2O + H(+). It functions in the pathway purine metabolism; 7-cyano-7-deazaguanine biosynthesis. Catalyzes the ATP-dependent conversion of 7-carboxy-7-deazaguanine (CDG) to 7-cyano-7-deazaguanine (preQ(0)). This chain is 7-cyano-7-deazaguanine synthase 1, found in Mesorhizobium japonicum (strain LMG 29417 / CECT 9101 / MAFF 303099) (Mesorhizobium loti (strain MAFF 303099)).